Consider the following 477-residue polypeptide: Aspartyl/glutamyl-tRNA(Asn/Gln) amidotransferase subunit B (477 aa).

Belongs to the GatB/GatE family. GatB subfamily. As to quaternary structure, heterotrimer of A, B and C subunits.

The catalysed reaction is L-glutamyl-tRNA(Gln) + L-glutamine + ATP + H2O = L-glutaminyl-tRNA(Gln) + L-glutamate + ADP + phosphate + H(+). It catalyses the reaction L-aspartyl-tRNA(Asn) + L-glutamine + ATP + H2O = L-asparaginyl-tRNA(Asn) + L-glutamate + ADP + phosphate + 2 H(+). Allows the formation of correctly charged Asn-tRNA(Asn) or Gln-tRNA(Gln) through the transamidation of misacylated Asp-tRNA(Asn) or Glu-tRNA(Gln) in organisms which lack either or both of asparaginyl-tRNA or glutaminyl-tRNA synthetases. The reaction takes place in the presence of glutamine and ATP through an activated phospho-Asp-tRNA(Asn) or phospho-Glu-tRNA(Gln). This Sulfurovum sp. (strain NBC37-1) protein is Aspartyl/glutamyl-tRNA(Asn/Gln) amidotransferase subunit B.